The following is a 98-amino-acid chain: Integration host factor subunit alpha (98 aa).

The interval 49 to 71 (FGNFDLRDKNQRPGRNPKTGEDI) is disordered.

This sequence belongs to the bacterial histone-like protein family. Heterodimer of an alpha and a beta chain.

In terms of biological role, this protein is one of the two subunits of integration host factor, a specific DNA-binding protein that functions in genetic recombination as well as in transcriptional and translational control. This Pectobacterium atrosepticum (strain SCRI 1043 / ATCC BAA-672) (Erwinia carotovora subsp. atroseptica) protein is Integration host factor subunit alpha.